A 3957-amino-acid polypeptide reads, in one-letter code: Ankyrin-2 (3957 aa).

Over residues 1-14 (MMNEDAAQKSDSGE) the composition is skewed to basic and acidic residues. The disordered stretch occupies residues 1–34 (MMNEDAAQKSDSGEKFNGSSQRRKRPKKSDSNAS). ANK repeat units follow at residues 30–62 (DSNASFLRAARAGNLDKVVEYLKGGIDINTCNQ), 63–92 (NGLNALHLAAKEGHVGLVQELLGRGSSVDS), 96–125 (KGNTALHIASLAGQAEVVKVLVKEGANINA), 129–158 (NGFTPLYMAAQENHIDVVKYLLENGANQST), 162–191 (DGFTPLAVALQQGHNQAVAILLENDTKGKV), 193–220 (LPALHIAARKDDTKSAALLLQNDHNADV), 232–261 (SGFTPLHIAAHYGNVNVATLLLNRGAAVDF), 265–294 (NGITPLHVASKRGNTNMVKLLLDRGGQIDA), 298–327 (DGLTPLHCAARSGHDQVVELLLERGAPLLA), 331–360 (NGLSPLHMAAQGDHVECVKHLLQHKAPVDD), 364–393 (DYLTALHVAAHCGHYRVTKLLLDKRANPNA), 397–426 (NGFTPLHIACKKNRIKVMELLVKYGASIQA), 430–459 (SGLTPIHVAAFMGHLNIVLLLLQNGASPDV), 463–492 (RGETALHMAARAGQVEVVRCLLRNGALVDA), 496–525 (EEQTPLHIASRLGKTEIVQLLLQHMAHPDA), 529–558 (NGYTPLHISAREGQVDVASVLLEAGAAHSL), 562–591 (KGFTPLHVAAKYGSLDVAKLLLQRRAAADS), 595–624 (NGLTPLHVAAHYDNQKVALLLLEKGASPHA), 628–657 (NGYTPLHIAAKKNQMQIASTLLNYGAETNI), 661–690 (QGVTPLHLASQEGHTDMVTLLLDKGANIHM), 694–723 (SGLTSLHLAAQEDKVNVADILTKHGADQDA), 727–756 (LGYTPLIVACHYGNVKMVNFLLKQGANVNA), 760–789 (NGYTPLHQAAQQGHTHIINVLLQHGAKPNA), and 793–822 (NGNTALAIAKRLGYISVVDTLKVVTEEVTT). A phosphoserine mark is found at S31 and S34. Y378 carries the post-translational modification Phosphotyrosine. Y531 carries the post-translational modification Phosphotyrosine. Position 846 is a phosphoserine (S846). At T853 the chain carries Phosphothreonine. Residue S874 is modified to Phosphoserine. The interaction with SPTBN1 stretch occupies residues 966–1125 (SGFLVSFMVD…ELNEILNGMD (160 aa)). ZU5 domains lie at 968 to 1156 (FLVS…VVSR) and 1158 to 1304 (KQDS…LIDC). The interval 1289–1423 (VSFTTNVSAR…FVKVRDTTQE (135 aa)) is UPA domain. Y1382 carries the phosphotyrosine modification. Positions 1450–1535 (ITLPIYTKES…SDKAGSIKVK (86 aa)) constitute a Death 1 domain. Residues 1457–1486 (KESESDQEQEEEIDMTSEKNDETESTETSV) are disordered. 5 positions are modified to phosphoserine: S1459, S1461, S1473, S1500, and S1596. Residues 1461 to 1471 (SDQEQEEEIDM) are compositionally biased toward acidic residues. 7 disordered regions span residues 1670–2137 (AVGR…TDFS), 2197–2411 (ALDG…GLEL), 2430–2484 (AVSH…GIFP), 2507–2586 (SRLL…TPEE), 2604–2852 (EAKQ…SLPH), 2864–2904 (DISA…TDRF), and 2923–2951 (QITSPYENVPSQSFFSSEESKTQTDANHT). Basic and acidic residues-rich tracts occupy residues 1674–1683 (SSEKEGKDIP) and 1711–1733 (KQKQKEEGLQASAEKAELKKGSS). 3 positions are modified to phosphoserine: S1732, S1733, and S1736. Positions 1766 to 1783 (IKDKVKALQKRVEDEQKG) are enriched in basic and acidic residues. Repeat A repeat units lie at residues 1806-1817 (HPAASPSLKSER), 1818-1829 (HAPGSPSPKTER), 1830-1841 (HSTLSSSAKTER), 1842-1853 (HPPVSPSSKTEK), 1854-1865 (HSPVSPSAKTER), 1866-1877 (HSPASSSSKTEK), and 1878-1889 (HSPVSPSTKTER). The segment at 1806 to 1983 (HPAASPSLKS…PVSPTSKTER (178 aa)) is repeat-rich region. S1855 and S1858 each carry phosphoserine. Basic and acidic residues-rich tracts occupy residues 1886–1902 (KTERHSPVSSTKTERHP) and 1921–1937 (RTEKHPPVSPGRTEKRL). Residues 1890–1900 (HSPVSSTKTER) form a Repeat A; approximate repeat. Repeat A repeat units follow at residues 1901-1912 (HPPVSPSGKTDK) and 1913-1924 (RPPVSPSGRTEK). One copy of the Repeat A; approximate repeat lies at 1925-1935 (HPPVSPGRTEK). S1929 carries the post-translational modification Phosphoserine. Repeat A repeat units lie at residues 1936–1947 (RLPVSPSGRTDK), 1948–1959 (HQPVSTAGKTEK), 1960–1971 (HLPVSPSGKTEK), and 1972–1983 (QPPVSPTSKTER). Composition is skewed to basic and acidic residues over residues 1980–1994 (KTERIEETMSVRELM), 2003–2034 (PSKHKTGLFEHKSAKQKQPQEKGKVRVEKEKG), 2075–2093 (VKKEDAAGGKEKVLSHKIP), and 2102–2117 (EESHRESEVPKEKMAD). S2127 carries the post-translational modification Phosphoserine. Residues 2128–2137 (PDRKTSTDFS) are compositionally biased toward basic and acidic residues. T2239 is subject to Phosphothreonine. A compositionally biased stretch (polar residues) spans 2240–2251 (PETSPESLSFSP). S2243 carries the post-translational modification Phosphoserine. Basic and acidic residues predominate over residues 2252 to 2282 (KKSEEQTGETKESTKTETTTEIRSEKEHPTT). The residue at position 2269 (T2269) is a Phosphothreonine. The residue at position 2275 (S2275) is a Phosphoserine. Residues 2355–2376 (TFGSSAHKTQTDSEVQESTATS) are compositionally biased toward polar residues. Phosphoserine is present on residues S2405, S2440, S2454, S2516, and S2521. The span at 2523–2545 (EQTSLMESSGKSPLSPDTPSSEE) shows a compositional bias: polar residues. Basic and acidic residues-rich tracts occupy residues 2576 to 2586 (NGEKKRFTPEE) and 2604 to 2619 (EAKQKRDYKKEPKQEE). T2583 carries the phosphothreonine modification. S2679 and S2701 each carry phosphoserine. Low complexity predominate over residues 2696–2705 (PSSMDSNSSP). Basic and acidic residues predominate over residues 2729 to 2776 (EPGKSEEEKDSESHLAEDRHAVSTEAEDRSYDKLNRDTDQPKICDGHG). S2781 and S2795 each carry phosphoserine. Over residues 2781 to 2791 (SPSSSAAPVSS) the composition is skewed to low complexity. A compositionally biased stretch (polar residues) spans 2892–2903 (SQDSSITTQTDR). Phosphoserine is present on S2956. Disordered stretches follow at residues 2987 to 3016 (NFEGQDIKMESQQESTLWEMQSDSVSSSFE), 3069 to 3099 (LMVDRQSQGTTPDTTPARTPTEEGTPTSEQN), and 3136 to 3462 (QESR…PTKE). A compositionally biased stretch (polar residues) spans 2998-3016 (QQESTLWEMQSDSVSSSFE). Phosphoserine is present on S3075. T3078 is modified (phosphothreonine). A compositionally biased stretch (low complexity) spans 3078–3087 (TTPDTTPART). Over residues 3090–3099 (EEGTPTSEQN) the composition is skewed to polar residues. Basic and acidic residues predominate over residues 3137 to 3149 (ESREETLSEDVKE). Positions 3157 to 3169 (LPLETSAESLALS) are enriched in low complexity. Over residues 3175–3194 (VDDEADLLPDDVSEEVEEIP) the composition is skewed to acidic residues. 2 stretches are compositionally biased toward polar residues: residues 3198-3212 (AQLNSQMGISASTET) and 3256-3265 (LDFSTLTRSV). S3273, S3276, and S3277 each carry phosphoserine. A compositionally biased stretch (basic and acidic residues) spans 3335 to 3344 (EENKADEAKP). Positions 3357–3374 (VEQQLSDLDTSVQKTVAP) are enriched in polar residues. A phosphoserine mark is found at S3390 and S3409. The span at 3409–3423 (SYTETETESRERAEE) shows a compositional bias: basic and acidic residues. Over residues 3446 to 3460 (SRSTTSSCRGGTSPT) the composition is skewed to low complexity. Phosphoserine is present on S3474. The 85-residue stretch at 3569–3653 (IEERLAYIAD…DIVHLMETNT (85 aa)) folds into the Death 2 domain. Position 3735 is a phosphoserine (S3735). Phosphothreonine occurs at positions 3776, 3797, 3803, and 3814. Residues 3777-3858 (PGTETSETQK…VESADNQPET (82 aa)) are disordered. S3823 is subject to Phosphoserine. Residues 3832-3841 (PSEHREESSP) show a composition bias toward basic and acidic residues. Phosphoserine is present on S3909.

Interacts with RHBG and SPTBN1. Colocalizes with Na/K ATPase, Na/Ca exchanger and SPTBN1. Directly interacts with DMD; this interaction is necessary for DMD localization at the sarcolemma. Interacts with DCTN4; this interaction is required for DCTN4 retention at costameres. Identified in complexes that contain VIM, EZR, AHNAK, BFSP1, BFSP2, ANK2, PLEC, PRX and spectrin. Interacts (via death domain) with RABGAP1L (via Rab-GAP TBC domain). Phosphorylated at multiple sites by different protein kinases and each phosphorylation event regulates the protein's structure and function. Present in plasma membrane of neurons as well as glial cells throughout the brain. Expressed in fetal brain and in temporal cortex of adult brain. Also expressed in the inner segments of rod photoreceptors in retina.

The protein resides in the cytoplasm. Its subcellular location is the cytoskeleton. It localises to the membrane. It is found in the myofibril. The protein localises to the sarcomere. The protein resides in the m line. Its subcellular location is the apical cell membrane. It localises to the cell membrane. It is found in the postsynaptic cell membrane. The protein localises to the early endosome. The protein resides in the recycling endosome. Its subcellular location is the lysosome. It localises to the mitochondrion. It is found in the z line. The protein localises to the sarcolemma. The protein resides in the T-tubule. Its function is as follows. Plays an essential role in the localization and membrane stabilization of ion transporters and ion channels in several cell types, including cardiomyocytes, as well as in striated muscle cells. In skeletal muscle, required for proper localization of DMD and DCTN4 and for the formation and/or stability of a special subset of microtubules associated with costameres and neuromuscular junctions. In cardiomyocytes, required for coordinate assembly of Na/Ca exchanger, SLC8A1/NCX1, Na/K ATPases ATP1A1 and ATP1A2 and inositol 1,4,5-trisphosphate (InsP3) receptors at sarcoplasmic reticulum/sarcolemma sites. Required for expression and targeting of SPTBN1 in neonatal cardiomyocytes and for the regulation of neonatal cardiomyocyte contraction rate. In the inner segment of rod photoreceptors, required for the coordinated expression of the Na/K ATPase, Na/Ca exchanger and beta-2-spectrin (SPTBN1). Plays a role in endocytosis and intracellular protein transport. Associates with phosphatidylinositol 3-phosphate (PI3P)-positive organelles and binds dynactin to promote long-range motility of cells. Recruits RABGAP1L to (PI3P)-positive early endosomes, where RABGAP1L inactivates RAB22A, and promotes polarized trafficking to the leading edge of the migrating cells. Part of the ANK2/RABGAP1L complex which is required for the polarized recycling of fibronectin receptor ITGA5 ITGB1 to the plasma membrane that enables continuous directional cell migration. This is Ankyrin-2 (ANK2) from Homo sapiens (Human).